The sequence spans 407 residues: Tyrosine--tRNA ligase (407 aa).

Residue tyrosine 35 coordinates L-tyrosine. The short motif at 40–49 (PTADSLHVGH) is the 'HIGH' region element. Positions 168 and 172 each coordinate L-tyrosine. The 'KMSKS' region motif lies at 228 to 232 (KMGKT). Lysine 231 provides a ligand contact to ATP. Residues 341–405 (NSLVDLLAKC…RGKKNFNRIV (65 aa)) enclose the S4 RNA-binding domain.

The protein belongs to the class-I aminoacyl-tRNA synthetase family. TyrS type 1 subfamily. As to quaternary structure, homodimer.

It localises to the cytoplasm. The enzyme catalyses tRNA(Tyr) + L-tyrosine + ATP = L-tyrosyl-tRNA(Tyr) + AMP + diphosphate + H(+). Functionally, catalyzes the attachment of tyrosine to tRNA(Tyr) in a two-step reaction: tyrosine is first activated by ATP to form Tyr-AMP and then transferred to the acceptor end of tRNA(Tyr). The protein is Tyrosine--tRNA ligase of Clostridium botulinum (strain Loch Maree / Type A3).